The sequence spans 279 residues: Proteasome subunit beta 2 (279 aa).

Residues 1 to 53 constitute a propeptide, removed in mature form; by autocatalysis; that stretch reads MAAAFDPSGRFPDLFTSVGTSSFSAFLSKAAPELLPGRRPLPPGMATGLTPHA. Catalysis depends on Thr-54, which acts as the Nucleophile.

Belongs to the peptidase T1B family. In terms of assembly, the 20S proteasome core is composed of 14 alpha and 14 beta subunits that assemble into four stacked heptameric rings, resulting in a barrel-shaped structure. The two inner rings, each composed of seven catalytic beta subunits, are sandwiched by two outer rings, each composed of seven alpha subunits. The catalytic chamber with the active sites is on the inside of the barrel. Has a gated structure, the ends of the cylinder being occluded by the N-termini of the alpha-subunits. Is capped by the proteasome-associated ATPase, ARC.

It localises to the cytoplasm. The catalysed reaction is Cleavage of peptide bonds with very broad specificity.. It functions in the pathway protein degradation; proteasomal Pup-dependent pathway. Its activity is regulated as follows. The formation of the proteasomal ATPase ARC-20S proteasome complex, likely via the docking of the C-termini of ARC into the intersubunit pockets in the alpha-rings, may trigger opening of the gate for substrate entry. Interconversion between the open-gate and close-gate conformations leads to a dynamic regulation of the 20S proteasome proteolysis activity. Functionally, component of the proteasome core, a large protease complex with broad specificity involved in protein degradation. The sequence is that of Proteasome subunit beta 2 from Salinispora tropica (strain ATCC BAA-916 / DSM 44818 / JCM 13857 / NBRC 105044 / CNB-440).